We begin with the raw amino-acid sequence, 302 residues long: Succinate--CoA ligase [ADP-forming] subunit alpha (302 aa).

CoA is bound by residues 17–20 (TGST), Lys43, and 96–98 (ITE). Tyr159 lines the substrate pocket. The Tele-phosphohistidine intermediate role is filled by His247.

It belongs to the succinate/malate CoA ligase alpha subunit family. As to quaternary structure, heterotetramer of two alpha and two beta subunits.

The catalysed reaction is succinate + ATP + CoA = succinyl-CoA + ADP + phosphate. The enzyme catalyses GTP + succinate + CoA = succinyl-CoA + GDP + phosphate. The protein operates within carbohydrate metabolism; tricarboxylic acid cycle; succinate from succinyl-CoA (ligase route): step 1/1. Functionally, succinyl-CoA synthetase functions in the citric acid cycle (TCA), coupling the hydrolysis of succinyl-CoA to the synthesis of either ATP or GTP and thus represents the only step of substrate-level phosphorylation in the TCA. The alpha subunit of the enzyme binds the substrates coenzyme A and phosphate, while succinate binding and nucleotide specificity is provided by the beta subunit. In Staphylococcus epidermidis (strain ATCC 12228 / FDA PCI 1200), this protein is Succinate--CoA ligase [ADP-forming] subunit alpha.